The chain runs to 337 residues: tRNA N6-adenosine threonylcarbamoyltransferase (337 aa).

Fe cation contacts are provided by His-110 and His-114. Substrate contacts are provided by residues 133-137 (MVSGG), Asp-166, Gly-179, Asp-183, and Asn-276. Asp-302 serves as a coordination point for Fe cation.

This sequence belongs to the KAE1 / TsaD family. It depends on Fe(2+) as a cofactor.

The protein resides in the cytoplasm. It catalyses the reaction L-threonylcarbamoyladenylate + adenosine(37) in tRNA = N(6)-L-threonylcarbamoyladenosine(37) in tRNA + AMP + H(+). In terms of biological role, required for the formation of a threonylcarbamoyl group on adenosine at position 37 (t(6)A37) in tRNAs that read codons beginning with adenine. Is involved in the transfer of the threonylcarbamoyl moiety of threonylcarbamoyl-AMP (TC-AMP) to the N6 group of A37, together with TsaE and TsaB. TsaD likely plays a direct catalytic role in this reaction. The sequence is that of tRNA N6-adenosine threonylcarbamoyltransferase from Fervidobacterium nodosum (strain ATCC 35602 / DSM 5306 / Rt17-B1).